A 947-amino-acid polypeptide reads, in one-letter code: Serine-aspartate repeat-containing protein C (947 aa).

The N-terminal stretch at 1 to 50 (MNNKKTATNRKGMIPNRLNKFSIRKYSVGTASILVGTTLIFGLSGHEAKA) is a signal peptide. Positions 21-32 (FSIRKYSVGTAS) match the YSIRK-G/S signaling motif motif. Residues 51 to 164 (AEHTNGELNQ…STTPKTTTIK (114 aa)) form a disordered region. The segment at 51 to 495 (AEHTNGELNQ…GSSTANGDQK (445 aa)) is ligand binding A region. A compositionally biased stretch (polar residues) spans 56–71 (GELNQSKNETTAPSEN). The span at 72-83 (KTTKKVDSRQLK) shows a compositional bias: basic and acidic residues. A compositionally biased stretch (polar residues) spans 84–155 (DNTQTATADQ…SNLTQAKDVS (72 aa)). 2 consecutive CNA-B domains span residues 496–606 (KYNL…YKTP) and 607–717 (KYSL…EEET). The disordered stretch occupies residues 678–927 (TQTGTNTTED…NNSNNGTLFG (250 aa)). 2 stretches are compositionally biased toward acidic residues: residues 685 to 695 (TEDDKDADGGE) and 712 to 886 (YYEE…DSDS). Residues 910–914 (LPETG) carry the LPXTG sorting signal motif. Positions 912-927 (ETGSENNNSNNGTLFG) are enriched in low complexity. At Thr-913 the chain carries Pentaglycyl murein peptidoglycan amidated threonine. The propeptide at 914–947 (GSENNNSNNGTLFGGLFAALGSLLLFGRRKKQNK) is removed by sortase.

This sequence belongs to the serine-aspartate repeat-containing protein (SDr) family. As to quaternary structure, homodimerizes; via N2-Domain. Interacts with host NRXN1; this interaction mediates bacterial attachment to host cells.

The protein resides in the secreted. It localises to the cell wall. Functionally, cell surface-associated calcium-binding protein which plays an important role in adhesion and pathogenesis. Mediates interactions with components of the extracellular matrix such as host NRXN1 to promote bacterial adhesion. This is Serine-aspartate repeat-containing protein C (sdrC) from Staphylococcus aureus (strain Newman).